Here is a 148-residue protein sequence, read N- to C-terminus: Large ribosomal subunit protein bL9 (148 aa).

It belongs to the bacterial ribosomal protein bL9 family.

Binds to the 23S rRNA. This chain is Large ribosomal subunit protein bL9, found in Staphylococcus saprophyticus subsp. saprophyticus (strain ATCC 15305 / DSM 20229 / NCIMB 8711 / NCTC 7292 / S-41).